We begin with the raw amino-acid sequence, 135 residues long: C-type lectin Cal (135 aa).

Disulfide bonds link Cys3–Cys14, Cys31–Cys131, Cys38–Cys133, and Cys106–Cys123. Positions 10–132 (MNGLCYKIFN…CESKDAFLCQ (123 aa)) constitute a C-type lectin domain. The Ca(2+) site is built by Gln96, Asp98, Glu104, Asn119, and Asp120. The short motif at 96-98 (QPD) is the Galactose-binding element.

The protein belongs to the true venom lectin family. In terms of assembly, homodecamer of disulfide-linked dimers arranged in two pseudo-5-fold symmetric pentamers. Expressed by the venom gland.

The protein localises to the secreted. In terms of biological role, galactose-binding protein which recognizes specific carbohydrate structures and agglutinates a variety of animal cells by binding to cell-surface glycoproteins and glycolipids. Calcium-dependent lectin. Shows high hemagglutinating activity (MHC=10 ng/ml). This is C-type lectin Cal from Crotalus atrox (Western diamondback rattlesnake).